The following is a 296-amino-acid chain: Nitrogenase iron protein 1 (296 aa).

Position 11–18 (11–18) interacts with ATP; sequence GKGGIGKS. A [4Fe-4S] cluster-binding site is contributed by C99. R102 carries the ADP-ribosylarginine; by dinitrogenase reductase ADP-ribosyltransferase modification. [4Fe-4S] cluster is bound at residue C133.

The protein belongs to the NifH/BchL/ChlL family. Homodimer. The cofactor is [4Fe-4S] cluster. In terms of processing, the reversible ADP-ribosylation of Arg-102 inactivates the nitrogenase reductase and regulates nitrogenase activity.

The catalysed reaction is N2 + 8 reduced [2Fe-2S]-[ferredoxin] + 16 ATP + 16 H2O = H2 + 8 oxidized [2Fe-2S]-[ferredoxin] + 2 NH4(+) + 16 ADP + 16 phosphate + 6 H(+). The key enzymatic reactions in nitrogen fixation are catalyzed by the nitrogenase complex, which has 2 components: the iron protein and the molybdenum-iron protein. This Azorhizobium caulinodans (strain ATCC 43989 / DSM 5975 / JCM 20966 / LMG 6465 / NBRC 14845 / NCIMB 13405 / ORS 571) protein is Nitrogenase iron protein 1 (nifH1).